Reading from the N-terminus, the 257-residue chain is 5-oxoprolinase subunit A (257 aa).

The protein belongs to the LamB/PxpA family. In terms of assembly, forms a complex composed of PxpA, PxpB and PxpC.

The catalysed reaction is 5-oxo-L-proline + ATP + 2 H2O = L-glutamate + ADP + phosphate + H(+). Its function is as follows. Catalyzes the cleavage of 5-oxoproline to form L-glutamate coupled to the hydrolysis of ATP to ADP and inorganic phosphate. The polypeptide is 5-oxoprolinase subunit A (Pectobacterium atrosepticum (strain SCRI 1043 / ATCC BAA-672) (Erwinia carotovora subsp. atroseptica)).